We begin with the raw amino-acid sequence, 92 residues long: UPF0358 protein Exig_1994 (92 aa).

It belongs to the UPF0358 family.

The polypeptide is UPF0358 protein Exig_1994 (Exiguobacterium sibiricum (strain DSM 17290 / CCUG 55495 / CIP 109462 / JCM 13490 / 255-15)).